The following is a 595-amino-acid chain: Leiomodin-1 (595 aa).

3 disordered regions span residues 1-69 (MSKV…EAML), 81-322 (QREM…KVKN), and 467-568 (DKQR…QEKN). S12 is subject to Phosphoserine. The span at 27–40 (EEMEELEKELDVVD) shows a compositional bias: acidic residues. 8 stretches are compositionally biased toward basic and acidic residues: residues 81-110 (QREM…DASR), 117-127 (QDSDLGKEPKK), 134-192 (FSRD…EKTG), 200-223 (SRDK…KLTA), 230-249 (GRRE…KPED), 257-287 (RDWR…KAPE), 467-476 (DKQRQKRLQE), and 484-493 (SGEKKDRLEV). A Phosphoserine modification is found at S85. Residue S135 is modified to Phosphoserine. Tandem repeats lie at residues 165–179 (AAVD…GREE), 180–195 (RAAA…GSVK), 196–211 (NAGL…EEVK), 212–226 (EPSK…AESR), 227–240 (NTVG…LKES), 242–255 (KENK…IGSG), 256–271 (GRDW…KEEN), and 272–288 (QPDK…APEK). Residues 165–288 (AAVDRKESGK…EESKTKAPEK (124 aa)) are 8 X approximate tandem repeats. Residues 503-522 (SPKPSPQPSPKPAPKNSPKK) are 5 X 4 AA approximate tandem repeats. Composition is skewed to pro residues over residues 505-517 (KPSP…PAPK) and 527-538 (AAPPPPPPPLAP). A Phosphoserine modification is found at S550. Residues 569–588 (SRDQLLAAIRSSNLKQLKKV) form the WH2 domain.

It belongs to the tropomodulin family. In terms of tissue distribution, detected in aorta, urinary bladder and uterus (at protein level). Detected in smooth muscle cells. Detected in aorta, bladder, colon, intestine, stomach and uterus.

Its subcellular location is the cytoplasm. It is found in the myofibril. The protein localises to the sarcomere. The protein resides in the cytoskeleton. Its function is as follows. Required for proper contractility of visceral smooth muscle cells. Mediates nucleation of actin filaments. This Mus musculus (Mouse) protein is Leiomodin-1 (Lmod1).